Reading from the N-terminus, the 268-residue chain is 2,5-diamino-6-ribosylamino-4(3H)-pyrimidinone 5'-phosphate reductase (268 aa).

NADP(+) is bound by residues Thr68, Asp72, 103–106 (SNLR), and 191–195 (GAELL).

This sequence belongs to the HTP reductase family. As to quaternary structure, homodimer.

It carries out the reaction 2,5-diamino-6-(1-D-ribitylamino)pyrimidin-4(3H)-one 5'-phosphate + NADP(+) = 2,5-diamino-6-(1-D-ribosylamino)pyrimidin-4(3H)-one 5'-phosphate + NADPH + H(+). It catalyses the reaction 2,5-diamino-6-(1-D-ribitylamino)pyrimidin-4(3H)-one 5'-phosphate + NAD(+) = 2,5-diamino-6-(1-D-ribosylamino)pyrimidin-4(3H)-one 5'-phosphate + NADH + H(+). It participates in cofactor biosynthesis; riboflavin biosynthesis. Catalyzes an early step in riboflavin biosynthesis, the NADPH-dependent reduction of the ribose side chain of 2,5-diamino-6-ribosylamino-4(3H)-pyrimidinone 5'-phosphate, yielding 2,5-diamino-6-ribitylamino-4(3H)-pyrimidinone 5'-phosphate. The polypeptide is 2,5-diamino-6-ribosylamino-4(3H)-pyrimidinone 5'-phosphate reductase (Schizosaccharomyces pombe (strain 972 / ATCC 24843) (Fission yeast)).